The following is an 858-amino-acid chain: DNA mismatch repair protein MutS (858 aa).

618–625 contacts ATP; the sequence is GPNMGGKS.

Belongs to the DNA mismatch repair MutS family.

This protein is involved in the repair of mismatches in DNA. It is possible that it carries out the mismatch recognition step. This protein has a weak ATPase activity. The sequence is that of DNA mismatch repair protein MutS from Shewanella woodyi (strain ATCC 51908 / MS32).